Consider the following 151-residue polypeptide: Endoribonuclease YbeY (151 aa).

The Zn(2+) site is built by His-108, His-112, and Asp-118.

It belongs to the endoribonuclease YbeY family. Zn(2+) serves as cofactor.

It is found in the cytoplasm. In terms of biological role, single strand-specific metallo-endoribonuclease involved in late-stage 70S ribosome quality control and in maturation of the 3' terminus of the 16S rRNA. The polypeptide is Endoribonuclease YbeY (Porphyromonas gingivalis (strain ATCC 33277 / DSM 20709 / CIP 103683 / JCM 12257 / NCTC 11834 / 2561)).